Here is a 334-residue protein sequence, read N- to C-terminus: tRNA uridine(34) hydroxylase (334 aa).

Residues 123-217 (SDPDVILVDT…YLEEVKAEES (95 aa)) enclose the Rhodanese domain. The Cysteine persulfide intermediate role is filled by Cys-177.

The protein belongs to the TrhO family.

The enzyme catalyses uridine(34) in tRNA + AH2 + O2 = 5-hydroxyuridine(34) in tRNA + A + H2O. Functionally, catalyzes oxygen-dependent 5-hydroxyuridine (ho5U) modification at position 34 in tRNAs. This Shewanella baltica (strain OS185) protein is tRNA uridine(34) hydroxylase.